The chain runs to 99 residues: MAVAQFLEGINEEITDIRVMASKYDTSRKTALIYIAAPKADLNQVMSFRMRDEEGEITVRDIRSKHLNGKFIGLEISHEMGSDAAWNRFYRFMERMGYA.

The protein belongs to the Psb28 family. As to quaternary structure, part of the photosystem II complex.

Its subcellular location is the cell inner membrane. This chain is Photosystem II reaction center Psb28 protein, found in Gloeobacter violaceus (strain ATCC 29082 / PCC 7421).